The sequence spans 105 residues: Thioredoxin (105 aa).

Residues 2–105 enclose the Thioredoxin domain; the sequence is VKQIESKYAF…KLEATINELI (104 aa). Lysine 3 bears the N6-acetyllysine mark. Position 8 is an N6-succinyllysine (lysine 8). Catalysis depends on nucleophile residues cysteine 32 and cysteine 35. A disulfide bridge connects residues cysteine 32 and cysteine 35. The residue at position 39 (lysine 39) is an N6-acetyllysine. Cysteine 62 and cysteine 69 each carry S-nitrosocysteine. The residue at position 73 (cysteine 73) is an S-nitrosocysteine; alternate. Lysine 94 is subject to N6-acetyllysine; alternate. Lysine 94 carries the post-translational modification N6-succinyllysine; alternate.

Belongs to the thioredoxin family. Homodimer; disulfide-linked. Interacts with TXNIP through the redox-active site. Interacts with MAP3K5 and CASP3. Interacts with APEX1; the interaction stimulates the FOS/JUN AP-1 DNA-binding activity in a redox-dependent manner. In terms of processing, in the fully reduced protein, both Cys-69 and Cys-73 are nitrosylated in response to nitric oxide (NO). When two disulfide bonds are present in the protein, only Cys-73 is nitrosylated. Cys-73 can serve as donor for nitrosylation of target proteins.

The protein resides in the nucleus. The protein localises to the cytoplasm. It is found in the secreted. Functionally, participates in various redox reactions through the reversible oxidation of its active center dithiol to a disulfide and catalyzes dithiol-disulfide exchange reactions. Plays a role in the reversible S-nitrosylation of cysteine residues in target proteins, and thereby contributes to the response to intracellular nitric oxide. Nitrosylates the active site Cys of CASP3 in response to nitric oxide (NO), and thereby inhibits caspase-3 activity. Induces the FOS/JUN AP-1 DNA binding activity in ionizing radiation (IR) cells through its oxidation/reduction status and stimulates AP-1 transcriptional activity. This chain is Thioredoxin (TXN), found in Bos taurus (Bovine).